Reading from the N-terminus, the 437-residue chain is GTPase Der (437 aa).

2 consecutive EngA-type G domains span residues 3-168 (PLIA…PESE) and 178-353 (VKLA…RNRS). Residues 9–16 (GRPNVGKS), 56–60 (DTGGY), 120–123 (NKVE), 184–191 (GRPNVGKS), 231–235 (DTAGL), and 296–299 (NKWD) contribute to the GTP site. In terms of domain architecture, KH-like spans 354–437 (RKISTSSLNR…VPISLRFMEK (84 aa)).

Belongs to the TRAFAC class TrmE-Era-EngA-EngB-Septin-like GTPase superfamily. EngA (Der) GTPase family. As to quaternary structure, associates with the 50S ribosomal subunit.

In terms of biological role, GTPase that plays an essential role in the late steps of ribosome biogenesis. In Chlorobium limicola (strain DSM 245 / NBRC 103803 / 6330), this protein is GTPase Der.